The sequence spans 584 residues: Beta-(1--&gt;2)glucan export ATP-binding/permease protein NdvA (584 aa).

Residues 21-301 (VSLVVAANII…MRQFSTQIFE (281 aa)) form the ABC transmembrane type-1 domain. The next 6 helical transmembrane spans lie at 29–49 (IILA…IDAI), 57–77 (DILF…VLVA), 136–156 (THLA…SMDV), 158–178 (LTLV…MVMD), 248–268 (IAST…VQSG), and 272–292 (VGDV…LDQM). An ABC transporter domain is found at 335-569 (VEFRHVSFDF…GGRFAALLHT (235 aa)). ATP is bound at residue 368–375 (GPTGAGKT).

Belongs to the ABC transporter superfamily. Beta-(1--&gt;2)glucan exporter (TC 3.A.1.108.1) family. As to quaternary structure, homodimer.

It is found in the cell inner membrane. It carries out the reaction [(1-&gt;2)-beta-D-glucosyl](n)(in) + ATP + H2O = [(1-&gt;2)-beta-D-glucosyl](n)(out) + ADP + phosphate + H(+). Involved in beta-(1--&gt;2)glucan export. Transmembrane domains (TMD) form a pore in the inner membrane and the ATP-binding domain (NBD) is responsible for energy generation. The protein is Beta-(1--&gt;2)glucan export ATP-binding/permease protein NdvA of Agrobacterium vitis (Rhizobium vitis).